The following is a 106-amino-acid chain: Transcription initiation factor IIA subunit 2 (106 aa).

This sequence belongs to the TFIIA subunit 2 family. In terms of assembly, TFIIA is a heterodimer of the large unprocessed subunit 1 and a small subunit gamma. It was originally believed to be a heterotrimer of an alpha, a beta and a gamma subunit.

It is found in the nucleus. Functionally, TFIIA is a component of the transcription machinery of RNA polymerase II and plays an important role in transcriptional activation. TFIIA in a complex with TBP mediates transcriptional activity. Protein involved in the resistance to X.oryzae. The sequence is that of Transcription initiation factor IIA subunit 2 (TFIIAy) from Oryza sativa subsp. indica (Rice).